We begin with the raw amino-acid sequence, 428 residues long: Histidinol dehydrogenase (428 aa).

Residues Ser234, Gln256, and His259 each coordinate substrate. Positions 256 and 259 each coordinate Zn(2+). Active-site proton acceptor residues include Glu323 and His324. Residues His324, Asp357, Glu411, and His416 each coordinate substrate. Residue Asp357 coordinates Zn(2+). His416 is a Zn(2+) binding site.

Belongs to the histidinol dehydrogenase family. Zn(2+) serves as cofactor.

It catalyses the reaction L-histidinol + 2 NAD(+) + H2O = L-histidine + 2 NADH + 3 H(+). It participates in amino-acid biosynthesis; L-histidine biosynthesis; L-histidine from 5-phospho-alpha-D-ribose 1-diphosphate: step 9/9. Functionally, catalyzes the sequential NAD-dependent oxidations of L-histidinol to L-histidinaldehyde and then to L-histidine. This Campylobacter jejuni subsp. jejuni serotype O:2 (strain ATCC 700819 / NCTC 11168) protein is Histidinol dehydrogenase.